We begin with the raw amino-acid sequence, 481 residues long: Glycosyl hydrolase family 109 protein 1 (481 aa).

The segment at residues 1 to 29 (MDNSSSRRRFLQTLGLATGALAAGSFANA) is a signal peptide (tat-type signal). NAD(+)-binding positions include 84–85 (ER), Asp106, 155–158 (WEWH), 175–176 (EV), and Asn204. Substrate-binding positions include Tyr233, Arg252, 264–267 (YPTH), and Tyr347. Tyr264 is an NAD(+) binding site.

It belongs to the Gfo/Idh/MocA family. Glycosyl hydrolase 109 subfamily. Requires NAD(+) as cofactor. In terms of processing, predicted to be exported by the Tat system. The position of the signal peptide cleavage has not been experimentally proven.

Glycosidase. The sequence is that of Glycosyl hydrolase family 109 protein 1 from Akkermansia muciniphila (strain ATCC BAA-835 / DSM 22959 / JCM 33894 / BCRC 81048 / CCUG 64013 / CIP 107961 / Muc).